A 229-amino-acid polypeptide reads, in one-letter code: Dolichyldiphosphatase 1 (229 aa).

4 helical membrane passes run Leu-27 to Ile-47, Met-94 to Leu-114, Phe-120 to Val-140, and Phe-156 to Ile-176.

The protein belongs to the dolichyldiphosphatase family.

The protein localises to the endoplasmic reticulum membrane. It carries out the reaction a di-trans,poly-cis-dolichyl diphosphate + H2O = a di-trans,poly-cis-dolichyl phosphate + phosphate + H(+). The protein operates within protein modification; protein glycosylation. Its function is as follows. Required for efficient N-glycosylation. Necessary for maintaining optimal levels of dolichol-linked oligosaccharides. Hydrolyzes dolichyl pyrophosphate at a very high rate and dolichyl monophosphate at a much lower rate. Does not act on phosphatidate. The polypeptide is Dolichyldiphosphatase 1 (dolpp1) (Dictyostelium discoideum (Social amoeba)).